A 166-amino-acid chain; its full sequence is Endoribonuclease YbeY (166 aa).

The Zn(2+) site is built by H131, H135, and H141.

This sequence belongs to the endoribonuclease YbeY family. Requires Zn(2+) as cofactor.

It localises to the cytoplasm. Single strand-specific metallo-endoribonuclease involved in late-stage 70S ribosome quality control and in maturation of the 3' terminus of the 16S rRNA. This is Endoribonuclease YbeY from Dehalococcoides mccartyi (strain CBDB1).